The following is a 104-amino-acid chain: Large ribosomal subunit protein bL21 (104 aa).

It belongs to the bacterial ribosomal protein bL21 family. Part of the 50S ribosomal subunit. Contacts protein L20.

Its function is as follows. This protein binds to 23S rRNA in the presence of protein L20. This Helicobacter pylori (strain J99 / ATCC 700824) (Campylobacter pylori J99) protein is Large ribosomal subunit protein bL21.